The sequence spans 284 residues: Putative cysteine-rich repeat secretory protein 7 (284 aa).

The signal sequence occupies residues 1 to 24 (MARIILTAPLFYFFFSLLSHQTMS). Gnk2-homologous domains are found at residues 26-128 (PQHM…NVSF) and 134-244 (SKPV…TFVL). The tract at residues 247-284 (PAPSPSSLPPISPTSSPPLSLPPQLPPPLSQPPPPLST) is disordered.

The protein belongs to the cysteine-rich repeat secretory protein family.

It localises to the secreted. The protein is Putative cysteine-rich repeat secretory protein 7 (CRRSP7) of Arabidopsis thaliana (Mouse-ear cress).